Reading from the N-terminus, the 790-residue chain is Cadherin-6 (790 aa).

Residues 1 to 18 form the signal peptide; the sequence is MRTYRYFLLLFWVGQPYP. Residues 19-53 constitute a propeptide that is removed on maturation; sequence TLSTPLSKRTSGFPAKKRALELSGNSKNELNRSKR. Residue Asn-49 is glycosylated (N-linked (GlcNAc...) asparagine). Cadherin domains lie at 54–159, 160–268, 269–383, 384–486, and 487–608; these read SWMW…EPIF, TKEV…PPRF, PQST…PPVF, SKLA…DNAP, and EFAE…LIHP. The Extracellular segment spans residues 54–615; sequence SWMWNQFFLL…IHPTGLSTGA (562 aa). Asn-255 carries N-linked (GlcNAc...) asparagine glycosylation. Residues 259–288 form a disordered region; sequence TDVNDNPPRFPQSTYQFKTPESSPPGTPIG. Residues 269–279 are compositionally biased toward polar residues; the sequence is PQSTYQFKTPE. N-linked (GlcNAc...) asparagine glycans are attached at residues Asn-399, Asn-437, Asn-455, and Asn-536. A helical membrane pass occupies residues 616–636; the sequence is LVAILLCIVILLVTVVLFAAL. Residues 637–790 are Cytoplasmic-facing; sequence RRQRKKEPLI…YGGVDSDKDS (154 aa). Phosphoserine occurs at positions 786 and 790.

As to expression, highly expressed in brain, cerebellum, and kidney. Lung, pancreas, and gastric mucosa show a weak expression. Also expressed in certain liver and kidney carcinomas.

It is found in the cell membrane. Its function is as follows. Cadherins are calcium-dependent cell adhesion proteins. They preferentially interact with themselves in a homophilic manner in connecting cells; cadherins may thus contribute to the sorting of heterogeneous cell types. The chain is Cadherin-6 (CDH6) from Homo sapiens (Human).